A 360-amino-acid polypeptide reads, in one-letter code: Ferredoxin--NADP reductase, leaf isozyme 1, chloroplastic (360 aa).

A chloroplast-targeting transit peptide spans 1–49 (MAAAISAAVSLPSSKSSSLLTKISSVSPQRIFLKKSTVCYRRVVSVKAQ). Positions 81 to 203 (KNPYTGRCLL…TGPVGKEMLM (123 aa)) constitute an FAD-binding FR-type domain. Residues 139 to 142 (RLYS), 160 to 162 (CVK), tyrosine 166, and 177 to 179 (VCS) contribute to the FAD site. NADP(+)-binding residues include serine 142 and lysine 162. Cysteine 178 and cysteine 183 are joined by a disulfide. Serine 179 bears the Phosphoserine mark. Position 210 is a phosphothreonine (threonine 210). Threonine 218 contributes to the FAD binding site. NADP(+)-binding positions include threonine 218, 250–251 (VP), 280–281 (SR), lysine 290, 319–320 (GL), and glutamate 358.

It belongs to the ferredoxin--NADP reductase type 1 family. As to quaternary structure, heterodimer with LFNR2. Interacts with PGRL1A and PGRL1B. Interacts with TIC62. Component of high molecular weight thylakoid LFNRs-containing protein complexes containing LIR1, LFNR1, LFNR2, TIC62 and TROL proteins. Interacts directly with LIR1 and TIC62; LIR1 increases the affinity of LFNR1 and LFNR2 for TIC62. Binds to YCF54 in chloroplasts. It depends on FAD as a cofactor. May form interchain disulfide bonds with LIR1. In terms of tissue distribution, expressed in shoots. Restricted to green tissues, being more abundant in siliques.

The protein localises to the plastid. It localises to the chloroplast stroma. It is found in the chloroplast thylakoid membrane. It catalyses the reaction 2 reduced [2Fe-2S]-[ferredoxin] + NADP(+) + H(+) = 2 oxidized [2Fe-2S]-[ferredoxin] + NADPH. Its pathway is energy metabolism; photosynthesis. Its function is as follows. Plays a key role in regulating the relative amounts of cyclic and non-cyclic electron flow to meet the demands of the plant for ATP and reducing power. Probable electron donor required for the MgProto monomethylester (MgProtoME) cyclase complex reaction to form protochlorophyllide, thus connecting chlorophyll synthesis with photosynthetic activity. This chain is Ferredoxin--NADP reductase, leaf isozyme 1, chloroplastic, found in Arabidopsis thaliana (Mouse-ear cress).